The sequence spans 284 residues: tRNA uridine(34) hydroxylase (284 aa).

One can recognise a Rhodanese domain in the interval 132–226 (DGRPVVMLDT…YFEEVGGAHY (95 aa)). Catalysis depends on Cys186, which acts as the Cysteine persulfide intermediate.

Belongs to the TrhO family.

The catalysed reaction is uridine(34) in tRNA + AH2 + O2 = 5-hydroxyuridine(34) in tRNA + A + H2O. Its function is as follows. Catalyzes oxygen-dependent 5-hydroxyuridine (ho5U) modification at position 34 in tRNAs. In Burkholderia vietnamiensis (strain G4 / LMG 22486) (Burkholderia cepacia (strain R1808)), this protein is tRNA uridine(34) hydroxylase.